The primary structure comprises 869 residues: DNA mismatch repair protein MutS (869 aa).

618–625 provides a ligand contact to ATP; sequence GPNMGGKS.

It belongs to the DNA mismatch repair MutS family.

Functionally, this protein is involved in the repair of mismatches in DNA. It is possible that it carries out the mismatch recognition step. This protein has a weak ATPase activity. This Zymomonas mobilis subsp. mobilis (strain ATCC 31821 / ZM4 / CP4) protein is DNA mismatch repair protein MutS.